Consider the following 179-residue polypeptide: 3-hydroxyanthranilate 3,4-dioxygenase (179 aa).

Position 47 (arginine 47) interacts with O2. Fe cation-binding residues include histidine 51, glutamate 57, and histidine 96. Substrate is bound at residue glutamate 57. Arginine 100 and glutamate 110 together coordinate substrate. Fe cation contacts are provided by cysteine 125, cysteine 128, cysteine 162, and cysteine 165.

The protein belongs to the 3-HAO family. Fe(2+) is required as a cofactor.

It catalyses the reaction 3-hydroxyanthranilate + O2 = (2Z,4Z)-2-amino-3-carboxymuconate 6-semialdehyde. Its pathway is cofactor biosynthesis; NAD(+) biosynthesis; quinolinate from L-kynurenine: step 3/3. Functionally, catalyzes the oxidative ring opening of 3-hydroxyanthranilate to 2-amino-3-carboxymuconate semialdehyde, which spontaneously cyclizes to quinolinate. The protein is 3-hydroxyanthranilate 3,4-dioxygenase of Bacillus cereus (strain 03BB102).